The chain runs to 174 residues: Non-classical export protein 2 homolog 1 (174 aa).

The Cytoplasmic portion of the chain corresponds to 1-7 (MLSAADN). A helical transmembrane segment spans residues 8 to 28 (LVRIINAVFLIISIGLISGLI). The Extracellular portion of the chain corresponds to 29-41 (GTQTKHSSRVNFC). The helical transmembrane segment at 42 to 62 (MFAAVYGLVTDSLYGFLANFW) threads the bilayer. At 63-69 (TSLTYPA) the chain is on the cytoplasmic side. Residues 70 to 90 (ILLVLDFLNFIFTFVAATALA) form a helical membrane-spanning segment. The Extracellular portion of the chain corresponds to 91–122 (VGIRCHSCKNKTYLEQNKIIQGSSSRCHQSQA). A helical transmembrane segment spans residues 123-143 (AVAFFYFSCFLFLIKVTVATM). Topologically, residues 144-174 (GMMQNGGFGSNTGFSRRRARRQMGIPTISQV) are cytoplasmic.

This sequence belongs to the NCE102 family.

The protein resides in the cell membrane. In terms of biological role, involved in membrane organization. Required for the formation of membrane compartments of CAN1 (MCCs), localization of CAN1 at the MCCs and subsequent invagination of the plasma membrane at the MCCs sites. Involved in eisosome organization and might act as a sensor of sphingolipids that regulates plasma membrane function. Involved in a novel pathway of export of proteins that lack a cleavable signal sequence. Non-classical export pathway also functions as an alternative clearance/detoxification pathway to eliminate damaged material, when the basic repair pathway is not sufficient. The sequence is that of Non-classical export protein 2 homolog 1 (FHN1) from Saccharomyces cerevisiae (strain ATCC 204508 / S288c) (Baker's yeast).